The sequence spans 341 residues: Uroporphyrinogen decarboxylase (341 aa).

Substrate is bound by residues 23–27 (RQAGR), D73, Y148, S203, and H318.

This sequence belongs to the uroporphyrinogen decarboxylase family. Homodimer.

The protein resides in the cytoplasm. It catalyses the reaction uroporphyrinogen III + 4 H(+) = coproporphyrinogen III + 4 CO2. It participates in porphyrin-containing compound metabolism; protoporphyrin-IX biosynthesis; coproporphyrinogen-III from 5-aminolevulinate: step 4/4. Functionally, catalyzes the decarboxylation of four acetate groups of uroporphyrinogen-III to yield coproporphyrinogen-III. In Brucella suis (strain ATCC 23445 / NCTC 10510), this protein is Uroporphyrinogen decarboxylase.